A 152-amino-acid polypeptide reads, in one-letter code: UPF0266 membrane protein YobD (152 aa).

Residues 1-5 (MTITD) are Periplasmic-facing. The chain crosses the membrane as a helical span at residues 6–26 (LVLILFIAALLAYALYDQFIM). Over 27–44 (PRRNGPTLLSIALLRRGR) the chain is Cytoplasmic. A helical membrane pass occupies residues 45–65 (IDSVIFVGLVAILIYNNVTSH). A topological domain (periplasmic) is located at residue G66. A helical membrane pass occupies residues 67-87 (AQMTTWLLSALALMGFYIFWI). Over 88-152 (RTPRIIFKQR…KIYKLLIENQ (65 aa)) the chain is Cytoplasmic.

This sequence belongs to the UPF0266 family.

It localises to the cell inner membrane. The polypeptide is UPF0266 membrane protein YobD (yobD) (Salmonella typhi).